A 323-amino-acid chain; its full sequence is 2-methylene-furan-3-one reductase (323 aa).

Residues Lys-59, 174-175 (GV), 197-200 (STKK), Tyr-216, Ile-254, 265-267 (FVL), and 312-313 (RA) each bind NADP(+). Lys-59 contacts substrate.

Belongs to the zinc-containing alcohol dehydrogenase family. Quinone oxidoreductase subfamily. As to quaternary structure, monomer. Post-translationally, the N-terminus is blocked. As to expression, expressed in parenchyma tissues of red fruits. Not found in vascular tissues. Also detected in the achenes.

The catalysed reaction is 4-hydroxy-2,5-dimethyl-furan-3(2H)-one + NADP(+) = 4-hydroxy-5-methyl-2-methylenefuran-3(2H)-one + NADPH + H(+). Enone oxidoreductase involved in the biosynthesis of 4-hydroxy-2,5-dimethyl-3(2H)-furanone (HDMF or furaneol), the key flavor compound in strawberries. Can use both NADH and NADPH as the electron donor. This chain is 2-methylene-furan-3-one reductase (EO), found in Fragaria ananassa (Strawberry).